A 248-amino-acid chain; its full sequence is Small ribosomal subunit protein uS5 (248 aa).

A disordered region spans residues 1-87; the sequence is MEDKKLSSAK…NPRFQRNNKD (87 aa). The span at 8-23 shows a compositional bias: low complexity; it reads SAKPATSSKPAPKAPS. The segment covering 57-87 has biased composition (basic and acidic residues); that stretch reads VAFEKRNFTSGDKTKKPTDSKNPRFQRNNKD. One can recognise an S5 DRBM domain in the interval 94-157; that stretch reads YEEKIVDIAR…KDAHNNLVEV (64 aa).

This sequence belongs to the universal ribosomal protein uS5 family. Part of the 30S ribosomal subunit. Contacts proteins S4 and S8.

Functionally, with S4 and S12 plays an important role in translational accuracy. In terms of biological role, located at the back of the 30S subunit body where it stabilizes the conformation of the head with respect to the body. The sequence is that of Small ribosomal subunit protein uS5 from Mycoplasmopsis synoviae (strain 53) (Mycoplasma synoviae).